Here is a 256-residue protein sequence, read N- to C-terminus: Trypsin, alkaline C (256 aa).

Positions 1–17 (MRLFLALLALGFAAVAA) are cleaved as a signal peptide. Residues 18-24 (VPANPQR) constitute a propeptide, activation peptide. The Peptidase S1 domain maps to 25–256 (IVGGSTTTIQ…RYTSWISNNS (232 aa)). Cysteines 55 and 71 form a disulfide. Active-site charge relay system residues include His-70 and Asp-115. 2 disulfides stabilise this stretch: Cys-180–Cys-197 and Cys-209–Cys-233. The active-site Charge relay system is Ser-213.

This sequence belongs to the peptidase S1 family. As to expression, midgut.

It is found in the secreted. The protein resides in the extracellular space. It carries out the reaction Preferential cleavage: Arg-|-Xaa, Lys-|-Xaa.. This is Trypsin, alkaline C from Manduca sexta (Tobacco hawkmoth).